The primary structure comprises 156 residues: ATP synthase subunit b (156 aa).

A helical transmembrane segment spans residues 11–31 (AIAFILFVWFCMKYVWPPLMA).

This sequence belongs to the ATPase B chain family. In terms of assembly, F-type ATPases have 2 components, F(1) - the catalytic core - and F(0) - the membrane proton channel. F(1) has five subunits: alpha(3), beta(3), gamma(1), delta(1), epsilon(1). F(0) has three main subunits: a(1), b(2) and c(10-14). The alpha and beta chains form an alternating ring which encloses part of the gamma chain. F(1) is attached to F(0) by a central stalk formed by the gamma and epsilon chains, while a peripheral stalk is formed by the delta and b chains.

The protein localises to the cell inner membrane. F(1)F(0) ATP synthase produces ATP from ADP in the presence of a proton or sodium gradient. F-type ATPases consist of two structural domains, F(1) containing the extramembraneous catalytic core and F(0) containing the membrane proton channel, linked together by a central stalk and a peripheral stalk. During catalysis, ATP synthesis in the catalytic domain of F(1) is coupled via a rotary mechanism of the central stalk subunits to proton translocation. Its function is as follows. Component of the F(0) channel, it forms part of the peripheral stalk, linking F(1) to F(0). The sequence is that of ATP synthase subunit b from Enterobacter sp. (strain 638).